The primary structure comprises 190 residues: MAVFNKLFKRRHSVSEEIKKDDLQEEVEATETEETVEEVIEETPEKSELELANERADEFENKYLRAHAEMQNIQRRSSEERQQLQRYRSQDLAKAILPSLDNLERALAVEGLTDDVKKGLEMTRDSLIQALKEEGVEEVEVDSFDHNFHMAVQTLPADDEHPADSIAEVFQKGYKLHERLLRPAMVVVYN.

Residues 21-49 (DDLQEEVEATETEETVEEVIEETPEKSEL) are disordered. Residues 23–42 (LQEEVEATETEETVEEVIEE) show a composition bias toward acidic residues.

Belongs to the GrpE family. In terms of assembly, homodimer.

It is found in the cytoplasm. Participates actively in the response to hyperosmotic and heat shock by preventing the aggregation of stress-denatured proteins, in association with DnaK and GrpE. It is the nucleotide exchange factor for DnaK and may function as a thermosensor. Unfolded proteins bind initially to DnaJ; upon interaction with the DnaJ-bound protein, DnaK hydrolyzes its bound ATP, resulting in the formation of a stable complex. GrpE releases ADP from DnaK; ATP binding to DnaK triggers the release of the substrate protein, thus completing the reaction cycle. Several rounds of ATP-dependent interactions between DnaJ, DnaK and GrpE are required for fully efficient folding. This Streptococcus pyogenes serotype M3 (strain SSI-1) protein is Protein GrpE.